The primary structure comprises 406 residues: Putative nickel insertion protein (406 aa).

It belongs to the LarC family.

This is Putative nickel insertion protein from Thermomicrobium roseum (strain ATCC 27502 / DSM 5159 / P-2).